Here is a 399-residue protein sequence, read N- to C-terminus: Phosphopentomutase (399 aa).

Residues Asp10, Asp296, His301, Asp337, His338, and His349 each contribute to the Mn(2+) site.

Belongs to the phosphopentomutase family. Requires Mn(2+) as cofactor.

It localises to the cytoplasm. It catalyses the reaction 2-deoxy-alpha-D-ribose 1-phosphate = 2-deoxy-D-ribose 5-phosphate. It carries out the reaction alpha-D-ribose 1-phosphate = D-ribose 5-phosphate. It participates in carbohydrate degradation; 2-deoxy-D-ribose 1-phosphate degradation; D-glyceraldehyde 3-phosphate and acetaldehyde from 2-deoxy-alpha-D-ribose 1-phosphate: step 1/2. Functionally, isomerase that catalyzes the conversion of deoxy-ribose 1-phosphate (dRib-1-P) and ribose 1-phosphate (Rib-1-P) to deoxy-ribose 5-phosphate (dRib-5-P) and ribose 5-phosphate (Rib-5-P), respectively. This is Phosphopentomutase from Idiomarina loihiensis (strain ATCC BAA-735 / DSM 15497 / L2-TR).